Consider the following 203-residue polypeptide: Sarcosine oxidase subunit gamma (203 aa).

This sequence belongs to the SoxG family. In terms of assembly, heterotetramer composed of subunits alpha (SoxA), beta (SoxB), gamma (SoxG) and delta (SoxD).

Its subcellular location is the cytoplasm. The enzyme catalyses sarcosine + (6S)-5,6,7,8-tetrahydrofolate + O2 = (6R)-5,10-methylene-5,6,7,8-tetrahydrofolate + glycine + H2O2. It carries out the reaction sarcosine + O2 + H2O = formaldehyde + glycine + H2O2. Functionally, in the presence of tetrahydrofolate, catalyzes the oxidative demethylation of sarcosine to yield glycine, 5,10-methylenetetrahydrofolate and hydrogen peroxide. In the absence of tetrahydrofolate, catalyzes the oxidative demethylation of sarcosine to yield glycine, formaldehyde and hydrogen peroxide. This is Sarcosine oxidase subunit gamma (soxG) from Arthrobacter sp.